Here is a 726-residue protein sequence, read N- to C-terminus: Beta-glucosidase cel3A (726 aa).

Residues 1-20 form the signal peptide; sequence MASRLVAGLQVLALAGTATA. Asn-223 and Asn-592 each carry an N-linked (GlcNAc...) asparagine glycan.

This sequence belongs to the glycosyl hydrolase 3 family.

It is found in the secreted. The catalysed reaction is Hydrolysis of terminal, non-reducing beta-D-glucosyl residues with release of beta-D-glucose.. Its pathway is glycan metabolism; cellulose degradation. Its function is as follows. Beta-glucosidases are one of a number of cellulolytic enzymes involved in the degradation of cellulosic biomass. Catalyzes the last step releasing glucose from the inhibitory cellobiose. Has a broad substrate specificity but preferentially hydrolyzes highly polymerized 1,3- and 1,4-beta-glucans. This chain is Beta-glucosidase cel3A, found in Pyricularia oryzae (strain 70-15 / ATCC MYA-4617 / FGSC 8958) (Rice blast fungus).